A 369-amino-acid chain; its full sequence is Methylthioribose-1-phosphate isomerase (369 aa).

Methionine 1 carries the N-acetylmethionine modification. Arginine 158 is subject to Omega-N-methylarginine. Catalysis depends on aspartate 248, which acts as the Proton donor. Serine 366 is subject to Phosphoserine.

Belongs to the eIF-2B alpha/beta/delta subunits family. MtnA subfamily.

The protein localises to the cytoplasm. It localises to the nucleus. It carries out the reaction 5-(methylsulfanyl)-alpha-D-ribose 1-phosphate = 5-(methylsulfanyl)-D-ribulose 1-phosphate. The protein operates within amino-acid biosynthesis; L-methionine biosynthesis via salvage pathway; L-methionine from S-methyl-5-thio-alpha-D-ribose 1-phosphate: step 1/6. Functionally, catalyzes the interconversion of methylthioribose-1-phosphate (MTR-1-P) into methylthioribulose-1-phosphate (MTRu-1-P). The sequence is that of Methylthioribose-1-phosphate isomerase (Mri1) from Rattus norvegicus (Rat).